We begin with the raw amino-acid sequence, 855 residues long: Pre-mRNA-splicing factor SYF1 (855 aa).

HAT repeat units follow at residues 15–47 (LVFEEEDLPYEEEIMRNQFSVKCWLRYIEFKQG), 48–80 (APKPRLNQLYERALKLLPCSYKLWYRYLKARRA), 90–122 (PAYEDVNNCHERAFVFMHKMPRLWLDYCQFLMD), 124–158 (GRVTHTRRTFDRALRALPITQHSRIWPLYLRFLRS), 160–192 (PLPETAVRGYRRFLKLSPESAEEYIEYLKSSDR), 198–230 (QRLATVVNDERFVSKAGKSNYQLWHELCDLISQ), 235–268 (VQSLNVDAIIRGGLTRFTDQLGKLWCSLADYYIR), 270–305 (GHFEKARDVYEEAIRTVMTVRDFTQVFDSYAQFEES), and 369–407 (GRPREIINTYTEAVQTVDPFKATGKPHTLWVAFAKFYED). K420 carries the post-translational modification N6-acetyllysine. 5 HAT repeats span residues 498-530 (GTFQSTKAVYDRILDLRIATPQIVINYAMFLEE), 532-566 (KYFEESFKAYERGISLFKWPNVSDIWSTYLTKFIA), 571-605 (RKLERARDLFEQALDGCPPKYAKTLYLLYAQLEEE), 643-677 (YGVTHTRGIYQKAIEVLSDEHAREMCLRFADMECK), and 679-713 (GEIDRARAIYSFCSQICDPRTTGAFWQTWKDFEVR). The tract at residues 810–855 (LAQQVNPEEIQLGEDEDEDEMDLEPNEVRLEQQSVPAAVFGSLKED) is disordered. Residues 820–834 (QLGEDEDEDEMDLEP) are compositionally biased toward acidic residues. S851 carries the post-translational modification Phosphoserine.

The protein belongs to the crooked-neck family. Associates with RNA polymerase II, the TCR-specific proteins CKN1/CSA and ERCC6/CSB, and XPA. Identified in the spliceosome C complex. Component of the XAB2 complex, a multimeric protein complex composed of XAB2, PRPF19, AQR, ZNF830, ISY1, and PPIE. Identified in a pentameric intron-binding (IB) complex composed of AQR, XAB2, ISY1, ZNF830 and PPIE that is incorporated into the spliceosome as a preassembled complex. The IB complex does not contain PRPF19.

It localises to the nucleus. Functionally, involved in pre-mRNA splicing as component of the spliceosome. Involved in transcription-coupled repair (TCR), transcription and pre-mRNA splicing. The protein is Pre-mRNA-splicing factor SYF1 (XAB2) of Homo sapiens (Human).